Here is a 372-residue protein sequence, read N- to C-terminus: Carbamoyl phosphate synthase small chain (372 aa).

Positions 1–184 (MKAYIYLEND…SFQKFNDAKR (184 aa)) are CPSase. L-glutamine is bound by residues Ser45, Gly240, and Gly242. The Glutamine amidotransferase type-1 domain maps to 188–372 (KVAVIDYGVK…YIFKEFMNLM (185 aa)). Cys268 (nucleophile) is an active-site residue. The L-glutamine site is built by Leu269, Gln272, Asn310, and Tyr313. Active-site residues include His351 and Glu353.

Belongs to the CarA family. As to quaternary structure, composed of two chains; the small (or glutamine) chain promotes the hydrolysis of glutamine to ammonia, which is used by the large (or ammonia) chain to synthesize carbamoyl phosphate. Tetramer of heterodimers (alpha,beta)4.

It carries out the reaction hydrogencarbonate + L-glutamine + 2 ATP + H2O = carbamoyl phosphate + L-glutamate + 2 ADP + phosphate + 2 H(+). It catalyses the reaction L-glutamine + H2O = L-glutamate + NH4(+). The protein operates within amino-acid biosynthesis; L-arginine biosynthesis; carbamoyl phosphate from bicarbonate: step 1/1. It participates in pyrimidine metabolism; UMP biosynthesis via de novo pathway; (S)-dihydroorotate from bicarbonate: step 1/3. Its function is as follows. Small subunit of the glutamine-dependent carbamoyl phosphate synthetase (CPSase). CPSase catalyzes the formation of carbamoyl phosphate from the ammonia moiety of glutamine, carbonate, and phosphate donated by ATP, constituting the first step of 2 biosynthetic pathways, one leading to arginine and/or urea and the other to pyrimidine nucleotides. The small subunit (glutamine amidotransferase) binds and cleaves glutamine to supply the large subunit with the substrate ammonia. The sequence is that of Carbamoyl phosphate synthase small chain from Campylobacter jejuni subsp. jejuni serotype O:2 (strain ATCC 700819 / NCTC 11168).